The sequence spans 558 residues: Protein NRT1/ PTR FAMILY 2.7 (558 aa).

12 helical membrane-spanning segments follow: residues 31–51, 63–83, 90–110, 140–162, 178–198, 204–224, 319–339, 357–377, 399–419, 440–460, 479–499, and 518–538; these read FMIA…LNLI, IAAA…PAVA, FFGT…GVAL, LGVL…FTLA, FFNW…TAIV, ISWT…FLVF, IIPL…QLSL, IPAG…IIVN, VGIG…VEAK, VLWL…HFPG, SITS…IDLI, and VYWI…VCSW.

The protein belongs to the major facilitator superfamily. Proton-dependent oligopeptide transporter (POT/PTR) (TC 2.A.17) family. As to expression, expressed in shoots and in the cortex of mature roots. Not expressed in root tip meristematic cells.

It is found in the cell membrane. Transporter involved in a passive nitrate efflux. Not competent for chloride transport. In Arabidopsis thaliana (Mouse-ear cress), this protein is Protein NRT1/ PTR FAMILY 2.7 (NPF2.7).